We begin with the raw amino-acid sequence, 514 residues long: CBL-interacting protein kinase 25 (514 aa).

The 261-residue stretch at 21 to 281 folds into the Protein kinase domain; the sequence is YEFGPLVGEG…IPEIMEMRWF (261 aa). Residues 27 to 35 and Lys-50 contribute to the ATP site; that span reads VGEGNFAKV. The active-site Proton acceptor is the Asp-149. Residues 167–196 form an activation loop region; it reads DFGLSALADMERREAHLQTVCGTPLFLAPE. A disordered region spans residues 303–340; that stretch reads GLDGEPELYDSDTDTIESSSSSESPTPVAGTPRGMHTS. The segment covering 304–317 has biased composition (acidic residues); the sequence is LDGEPELYDSDTDT. The segment covering 318 to 329 has biased composition (low complexity); the sequence is IESSSSSESPTP. The region spanning 323–395 is the NAF domain; it reads SSESPTPVAG…PSFDLSGLFE (73 aa). Residues 398-427 form a PPI region; that stretch reads GERMRFVSGAPVADIIAKLQEIAGMVSFTA.

Belongs to the protein kinase superfamily. CAMK Ser/Thr protein kinase family. SNF1 subfamily. The cofactor is Mn(2+).

The catalysed reaction is L-seryl-[protein] + ATP = O-phospho-L-seryl-[protein] + ADP + H(+). It carries out the reaction L-threonyl-[protein] + ATP = O-phospho-L-threonyl-[protein] + ADP + H(+). In terms of biological role, CIPK serine-threonine protein kinases interact with CBL proteins. Binding of a CBL protein to the regulatory NAF domain of CIPK protein lead to the activation of the kinase in a calcium-dependent manner. This chain is CBL-interacting protein kinase 25 (CIPK25), found in Oryza sativa subsp. japonica (Rice).